Consider the following 242-residue polypeptide: Small ribosomal subunit protein eS6 (242 aa).

Over residues 219 to 229 the composition is skewed to basic and acidic residues; that stretch reads EKKSEKAEEKK. The segment at 219–242 is disordered; sequence EKKSEKAEEKKRRASSLRTQSVQA. A phosphoserine mark is found at Ser-233 and Ser-234.

Belongs to the eukaryotic ribosomal protein eS6 family. In terms of processing, phosphorylated.

This chain is Small ribosomal subunit protein eS6 (RPS6), found in Yarrowia lipolytica (strain CLIB 122 / E 150) (Yeast).